A 352-amino-acid polypeptide reads, in one-letter code: Chalcone synthase C (352 aa).

Cys170 is an active-site residue.

It belongs to the thiolase-like superfamily. Chalcone/stilbene synthases family.

The enzyme catalyses (E)-4-coumaroyl-CoA + 3 malonyl-CoA + 3 H(+) = 2',4,4',6'-tetrahydroxychalcone + 3 CO2 + 4 CoA. It functions in the pathway secondary metabolite biosynthesis; flavonoid biosynthesis. In terms of biological role, the primary product of this enzyme is 4,2',4',6'-tetrahydroxychalcone (also termed naringenin-chalcone or chalcone) which can under specific conditions spontaneously isomerize into naringenin. In Ipomoea purpurea (Common morning glory), this protein is Chalcone synthase C (CHSC).